Consider the following 473-residue polypeptide: MSTELFSSTREEGSSGSGPSFRSNQRKMLNLLLERDTSFTVCPDVPRTPVGKFLGDSANLSILSGGTPKRCLDLSNLSSGEITATQLTTSADLDETGHLDSSGLQEVHLAGMNHDQHLMKCSPAQLLCSTPNGLDRGHRKRDAMCSSSANKENDNGNLVDSEMKYLGSPITTVPKLDKNPNLGEDQAEEISDELMEFSLKDQEAKVSRSGLYRSPSMPENLNRPRLKQVEKFKDNTIPDKVKKKYFSGQGKLRKGLCLKKTVSLCDITITQMLEEDSNQGHLIGDFSKVCALPTVSGKHQDLKYVNPETVAALLSGKFQGLIEKFYVIDCRYPYEYLGGHIQGALNLYSQEELFNFFLKKPIVPLDTQKRIIIVFHCEFSSERGPRMCRCLREEDRSLNQYPALYYPELYILKGGYRDFFPEYMELCEPQSYCPMHHQDHKTELLRCRSQSKVQEGERQLREQIALLVKDMSP.

The tract at residues 1–23 (MSTELFSSTREEGSSGSGPSFRS) is disordered. N-acetylserine is present on Ser-2. Phosphoserine is present on residues Ser-20 and Ser-38. At Thr-48 the chain carries Phosphothreonine. Residues Ser-57, Ser-61, and Ser-64 each carry the phosphoserine modification. Residue Thr-67 is modified to Phosphothreonine. Ser-122 carries the post-translational modification Phosphoserine; by CDK1. Residue Ser-129 is modified to Phosphoserine. Phosphothreonine is present on Thr-130. Positions 132–158 (NGLDRGHRKRDAMCSSSANKENDNGNL) are disordered. Residues 145-158 (CSSSANKENDNGNL) show a composition bias toward polar residues. The residue at position 168 (Ser-168) is a Phosphoserine. Residues Ser-191 and Ser-198 each carry the phosphoserine; by PLK3 modification. Ser-214 is subject to Phosphoserine; by CDK1. Ser-216 carries the post-translational modification Phosphoserine; by CHEK1, CHEK2, BRSK1, MAPK14 AND MARK3. One can recognise a Rhodanese domain in the interval 321-428 (LIEKFYVIDC…FFPEYMELCE (108 aa)). Positions 334–379 (YEYLGGHIQGALNLYSQEELFNFFLKKPIVPLDTQKRIIIVFHCEF) are HIV-1 Vpr binding site. Cys-377 is a catalytic residue. Ser-472 is modified (phosphoserine).

The protein belongs to the MPI phosphatase family. As to quaternary structure, interacts with MAPK14 and 14-3-3 proteins. When phosphorylated on Ser-129 and/or Thr-130, interacts with PLK1. Interacts with MARK3/C-TAK1. (Microbial infection) Interacts with HIV-1 Vpr; this interaction inactivates CDC25C phosphatase activity. In terms of processing, phosphorylated by CHEK1 and MAPK14 at Ser-216. This phosphorylation creates a binding site for 14-3-3 protein and inhibits the phosphatase. Phosphorylated by PLK4. Phosphorylated by PLK1, leading to activate the phosphatase activity. Phosphorylation by PLK3 at Ser-191 promotes nuclear translocation. Ser-198 is a minor phosphorylation site. Was initially reported to be phosphorylated by PLK3 at Ser-216. However, such phosphorylation by PLK3 was not confirmed by other groups. Phosphorylation at Thr-48, Thr-67, Ser-122, Thr-130, Ser-168 and Ser-214 occurs at G2 and G2-M transition and is probably catalyzed by CDK1. Ser-168 phosphorylation levels are lower than those at the other 5 CDK1 sites. Phosphorylation by CDK1 leads to increased activity.

Its subcellular location is the nucleus. The enzyme catalyses O-phospho-L-tyrosyl-[protein] + H2O = L-tyrosyl-[protein] + phosphate. Functions as a dosage-dependent inducer in mitotic control. Tyrosine protein phosphatase required for progression of the cell cycle. When phosphorylated, highly effective in activating G2 cells into prophase. Directly dephosphorylates CDK1 and activates its kinase activity. This Homo sapiens (Human) protein is M-phase inducer phosphatase 3 (CDC25C).